A 66-amino-acid chain; its full sequence is MKRKDTLKDFRGKSIDQLQEAKIELLQQLFSLRMQKGTGQLKKNHLFKSAKRDIARINTIISEKNK.

It belongs to the universal ribosomal protein uL29 family.

In Francisella philomiragia subsp. philomiragia (strain ATCC 25017 / CCUG 19701 / FSC 153 / O#319-036), this protein is Large ribosomal subunit protein uL29.